A 325-amino-acid chain; its full sequence is D-alanine--D-alanine ligase (325 aa).

An ATP-grasp domain is found at K121 to R316. V147–T202 contacts ATP. Mg(2+) is bound by residues D270, E283, and N285.

It belongs to the D-alanine--D-alanine ligase family. Mg(2+) is required as a cofactor. The cofactor is Mn(2+).

Its subcellular location is the cytoplasm. It catalyses the reaction 2 D-alanine + ATP = D-alanyl-D-alanine + ADP + phosphate + H(+). It functions in the pathway cell wall biogenesis; peptidoglycan biosynthesis. Functionally, cell wall formation. The protein is D-alanine--D-alanine ligase of Marinobacter nauticus (strain ATCC 700491 / DSM 11845 / VT8) (Marinobacter aquaeolei).